Consider the following 128-residue polypeptide: Small ribosomal subunit protein uS13 (128 aa).

Positions 98–128 are disordered; it reads VRGQRTRTNARTRKGPRPRIGVKKKGKQAGS. Basic residues predominate over residues 101–128; the sequence is QRTRTNARTRKGPRPRIGVKKKGKQAGS.

Belongs to the universal ribosomal protein uS13 family. In terms of assembly, part of the 30S ribosomal subunit. Forms a loose heterodimer with protein S19. Forms two bridges to the 50S subunit in the 70S ribosome.

Functionally, located at the top of the head of the 30S subunit, it contacts several helices of the 16S rRNA. In the 70S ribosome it contacts the 23S rRNA (bridge B1a) and protein L5 of the 50S subunit (bridge B1b), connecting the 2 subunits; these bridges are implicated in subunit movement. Contacts the tRNAs in the A and P-sites. The chain is Small ribosomal subunit protein uS13 from Thermomicrobium roseum (strain ATCC 27502 / DSM 5159 / P-2).